The following is a 364-amino-acid chain: DNA polymerase IV (364 aa).

The UmuC domain maps to 14–198 (IIHIDMDAFF…LPIEKFHGVG (185 aa)). 2 residues coordinate Mg(2+): D18 and D116. E117 is an active-site residue.

It belongs to the DNA polymerase type-Y family. In terms of assembly, monomer. It depends on Mg(2+) as a cofactor.

It localises to the cytoplasm. The enzyme catalyses DNA(n) + a 2'-deoxyribonucleoside 5'-triphosphate = DNA(n+1) + diphosphate. Poorly processive, error-prone DNA polymerase involved in untargeted mutagenesis. Copies undamaged DNA at stalled replication forks, which arise in vivo from mismatched or misaligned primer ends. These misaligned primers can be extended by PolIV. Exhibits no 3'-5' exonuclease (proofreading) activity. May be involved in translesional synthesis, in conjunction with the beta clamp from PolIII. The chain is DNA polymerase IV from Streptococcus pyogenes serotype M12 (strain MGAS2096).